The chain runs to 282 residues: Armadillo repeat-containing protein 1 (282 aa).

At Met-1 the chain carries N-acetylmethionine. The stretch at 39 to 81 (GCLPGLILFMDHPNPPVVHSALLALRYLAECRANREKMKGELG) is one ARM repeat. The residue at position 137 (Thr-137) is a Phosphothreonine. Phosphoserine is present on residues Ser-189, Ser-246, Ser-260, and Ser-267. The tract at residues 239–261 (DYLPEDESPTKEQDKAVSRVGSH) is disordered. Residues 246 to 255 (SPTKEQDKAV) are compositionally biased toward basic and acidic residues.

In terms of assembly, interacts with mitochondrial contact site and cristae organizing system (MICOS) complex components IMMT/MIC60 and MICOS10/MIC10. Interacts with mitochondrial outer membrane sorting assembly machinery (SAM) complex components SAMM50 and MTX1.

Its subcellular location is the cytoplasm. The protein resides in the mitochondrion. It localises to the mitochondrion outer membrane. Functionally, in association with mitochondrial contact site and cristae organizing system (MICOS) complex components and mitochondrial outer membrane sorting assembly machinery (SAM) complex components may regulate mitochondrial dynamics playing a role in determining mitochondrial length, distribution and motility. In Bos taurus (Bovine), this protein is Armadillo repeat-containing protein 1 (ARMC1).